The chain runs to 692 residues: DNA ligase (692 aa).

Over residues 1 to 14 (MQPDLFSTASQADA) the composition is skewed to polar residues. The tract at residues 1–27 (MQPDLFSTASQADANATPEEPDASNPA) is disordered. NAD(+) is bound by residues 54–58 (DAEYD), 103–104 (SL), and Glu134. Residue Lys136 is the N6-AMP-lysine intermediate of the active site. Residues Arg157, Glu194, Lys311, and Lys335 each contribute to the NAD(+) site. Positions 429, 432, 447, and 454 each coordinate Zn(2+). Positions 612-692 (NKPKPFAGKT…ALLQLLDTHE (81 aa)) constitute a BRCT domain.

The protein belongs to the NAD-dependent DNA ligase family. LigA subfamily. It depends on Mg(2+) as a cofactor. Mn(2+) serves as cofactor.

The catalysed reaction is NAD(+) + (deoxyribonucleotide)n-3'-hydroxyl + 5'-phospho-(deoxyribonucleotide)m = (deoxyribonucleotide)n+m + AMP + beta-nicotinamide D-nucleotide.. In terms of biological role, DNA ligase that catalyzes the formation of phosphodiester linkages between 5'-phosphoryl and 3'-hydroxyl groups in double-stranded DNA using NAD as a coenzyme and as the energy source for the reaction. It is essential for DNA replication and repair of damaged DNA. The sequence is that of DNA ligase from Janthinobacterium sp. (strain Marseille) (Minibacterium massiliensis).